The primary structure comprises 751 residues: Cellulose synthase-like protein G3 (751 aa).

Transmembrane regions (helical) follow at residues 47–67 (IYAV…VHSL) and 72–92 (TTLI…MWAT). Active-site residues include D161 and D466. The next 6 membrane-spanning stretches (helical) occupy residues 543–563 (CWAF…LALL), 577–597 (FWLY…DFVL), 617–639 (FSSH…THGF), 674–694 (TVAI…FAWG), 697–717 (LVLE…IYEA), and 731–751 (VCFV…VFLK).

It belongs to the glycosyltransferase 2 family. Plant cellulose synthase-like G subfamily.

The protein localises to the golgi apparatus membrane. Functionally, thought to be a Golgi-localized beta-glycan synthase that polymerize the backbones of noncellulosic polysaccharides (hemicelluloses) of plant cell wall. This Arabidopsis thaliana (Mouse-ear cress) protein is Cellulose synthase-like protein G3 (CSLG3).